A 371-amino-acid chain; its full sequence is Cytochrome b (371 aa).

Transmembrane regions (helical) follow at residues 25 to 45 (FGSM…FLAI), 69 to 90 (WTMQ…YIHI), 105 to 125 (WLSG…GYVL), and 170 to 190 (FFAL…AHIM). Heme b is bound by residues H75 and H89. Positions 174 and 188 each coordinate heme b. Position 193 (H193) interacts with a ubiquinone. A run of 4 helical transmembrane segments spans residues 218 to 238 (NKDM…LSFL), 280 to 300 (LGGT…PFTH), 312 to 332 (MTQT…WTAT), and 339 to 358 (FMFI…FMNP).

Belongs to the cytochrome b family. As to quaternary structure, the cytochrome bc1 complex contains 3 respiratory subunits (MT-CYB, CYC1 and UQCRFS1), 2 core proteins (UQCRC1 and UQCRC2) and probably 6 low-molecular weight proteins. The cofactor is heme b.

The protein localises to the mitochondrion inner membrane. Component of the ubiquinol-cytochrome c reductase complex (complex III or cytochrome b-c1 complex) that is part of the mitochondrial respiratory chain. The b-c1 complex mediates electron transfer from ubiquinol to cytochrome c. Contributes to the generation of a proton gradient across the mitochondrial membrane that is then used for ATP synthesis. The polypeptide is Cytochrome b (MT-CYB) (Elapsoidea nigra (Usambara garter snake)).